Reading from the N-terminus, the 193-residue chain is Segregation and condensation protein B (193 aa).

It belongs to the ScpB family. As to quaternary structure, homodimer. Homodimerization may be required to stabilize the binding of ScpA to the Smc head domains. Component of a cohesin-like complex composed of ScpA, ScpB and the Smc homodimer, in which ScpA and ScpB bind to the head domain of Smc. The presence of the three proteins is required for the association of the complex with DNA.

It is found in the cytoplasm. Its function is as follows. Participates in chromosomal partition during cell division. May act via the formation of a condensin-like complex containing Smc and ScpA that pull DNA away from mid-cell into both cell halves. The protein is Segregation and condensation protein B of Streptococcus thermophilus (strain ATCC BAA-250 / LMG 18311).